A 306-amino-acid chain; its full sequence is D-alanine--D-alanine ligase (306 aa).

Positions 100-295 (KQIFRRAGLP…FGQLLERLME (196 aa)) constitute an ATP-grasp domain. 127–180 (RLPYPLFVKSNTGGSSLRLGRARNRAELDDIMGQIFAAGEEVIMEPVLPGREVT) provides a ligand contact to ATP. Mg(2+) is bound by residues Asp249, Glu262, and Asn264.

This sequence belongs to the D-alanine--D-alanine ligase family. Requires Mg(2+) as cofactor. Mn(2+) is required as a cofactor.

It localises to the cytoplasm. The catalysed reaction is 2 D-alanine + ATP = D-alanyl-D-alanine + ADP + phosphate + H(+). Its pathway is cell wall biogenesis; peptidoglycan biosynthesis. Cell wall formation. This Desulfovibrio desulfuricans (strain ATCC 27774 / DSM 6949 / MB) protein is D-alanine--D-alanine ligase.